A 1254-amino-acid polypeptide reads, in one-letter code: Zinc finger protein BRUTUS (1254 aa).

The disordered stretch occupies residues 1-40 (MATPLPDFETARGGGAVASSSTTVLPSSVSSSSSSSRPLP). Residues 19–40 (SSSTTVLPSSVSSSSSSSRPLP) show a composition bias toward low complexity. Residues 201–221 (FLCSIPVNMLAVFLPWISSSI) form a helical membrane-spanning segment. Residues 893-913 (GSPDSSSTETSKPSPQKDNDH) are disordered. The span at 895 to 906 (PDSSSTETSKPS) shows a compositional bias: polar residues. A CHY-type zinc finger spans residues 999 to 1068 (PEKQIYGCEH…PICTTPSCDG (70 aa)). Residues C1006, H1008, C1019, C1020, C1026, C1029, H1030, H1036, C1048, C1051, C1061, C1066, C1076, C1079, H1090, C1091, C1094, C1097, H1109, C1110, C1113, C1116, H1124, and C1126 each contribute to the Zn(2+) site. The CTCHY-type zinc-finger motif lies at 1071-1134 (MAKHYCSICK…KCLEKSLETN (64 aa)). Residues 1135–1176 (CPICCEFLFTSSEAVRALPCGHYMHSACFQAYTCSHYTCPIC) form an RING-type; atypical zinc finger.

In terms of assembly, interacts with the PYEL proteins bHLH115, bHLH104 and ILR3 in the nucleus. Binds zinc and iron ions. In terms of tissue distribution, expressed in cotyledons of seedlings, young leaves, developing and mature embryos, and other reproductive tissues including floral vasculature, funiculus, septum, and gynoecium valves.

The protein resides in the membrane. It is found in the nucleus. It participates in protein modification; protein ubiquitination. Functionally, essential protein. Negatively regulates the response to iron deficiency and thus contributes to iron homeostasis. Exhibits E3 ubiquitin-protein ligase activity in vitro. Plays a role in root growth, rhizosphere acidification, and iron reductase activity in response to iron deprivation. Facilitates 26S proteasome-mediated degradation of PYEL proteins in the absence of iron. This is Zinc finger protein BRUTUS from Arabidopsis thaliana (Mouse-ear cress).